The primary structure comprises 225 residues: THAP domain-containing protein 1 B (225 aa).

A THAP-type zinc finger spans residues 5–57; the sequence is CSAYGCKNRYDKDRPISFHKFPLKRPLLCKKWEAAVRRADFKPTKYSSICSDH. Positions 139 to 194 form a coiled coil; that stretch reads VEDTVHQRRRIQQLEEQVDKLRKKLKIANQKCRRQERSLEKLEKEVSEYREAKGSG.

It belongs to the THAP1 family.

The protein resides in the nucleus. It localises to the nucleoplasm. Functionally, DNA-binding transcription regulator that regulates endothelial cell proliferation and G1/S cell-cycle progression. Specifically binds the 5'-[AT]NTNN[GT]GGCA[AGT]-3' core DNA sequence and acts by modulating expression of pRB-E2F cell-cycle target genes. The chain is THAP domain-containing protein 1 B (thap1-b) from Xenopus laevis (African clawed frog).